An 86-amino-acid polypeptide reads, in one-letter code: Chymotrypsin inhibitor (86 aa).

The first 22 residues, 1–22 (MKLLFAIVALLALAFLCADISA), serve as a signal peptide directing secretion.

The protein belongs to the protease inhibitor I13 (potato type I serine protease inhibitor) family. In terms of assembly, monomer. In terms of tissue distribution, expressed in the body wall, coelomocytes and at a lower level in intestine.

The protein localises to the secreted. Functionally, inhibits L.terrestris digestive chymotrypsin LT_CH 1 and bovine alpha-chymotrypsin. This chain is Chymotrypsin inhibitor, found in Lumbricus terrestris (Common earthworm).